The following is a 437-amino-acid chain: Phenylacetate-coenzyme A ligase (437 aa).

This sequence belongs to the phenylacetyl-CoA ligase family. In terms of assembly, monomer.

The catalysed reaction is 2-phenylacetate + ATP + CoA = phenylacetyl-CoA + AMP + diphosphate. Its pathway is aromatic compound metabolism; phenylacetate degradation. Functionally, catalyzes the activation of phenylacetic acid (PA) to phenylacetyl-CoA (PA-CoA). In Escherichia coli (strain K12), this protein is Phenylacetate-coenzyme A ligase (paaK).